We begin with the raw amino-acid sequence, 934 residues long: Serine/threonine-protein kinase atg1 (934 aa).

A Protein kinase domain is found at 22-328 (YTRLDEIGRG…SDFFDCDTIT (307 aa)). ATP-binding positions include 28-36 (IGRGSFATV) and Lys-51. Asp-165 acts as the Proton acceptor in catalysis. Disordered stretches follow at residues 335–432 (IADD…PRRP), 462–481 (RNTY…TKEE), 531–580 (RRPG…YGQS), 684–703 (TDPS…TDLT), 800–822 (RLPP…GSGA), and 878–900 (EEEE…RRDG). The span at 340–368 (PSTSRRSSVAVNTSGSTSRPQSRTGSRTP) shows a compositional bias: polar residues. Residues 371–386 (MKREKDASYPGKKDDQ) are compositionally biased toward basic and acidic residues. Positions 538 to 550 (SSTATATSPLATT) are enriched in low complexity. Positions 561–577 (ARADSTHTRQGSYERRY) are enriched in basic and acidic residues.

This sequence belongs to the protein kinase superfamily. Ser/Thr protein kinase family. APG1/unc-51/ULK1 subfamily. In terms of assembly, homodimer. Forms a ternary complex with ATG13 and ATG17.

The protein localises to the cytoplasm. It localises to the preautophagosomal structure membrane. The catalysed reaction is L-seryl-[protein] + ATP = O-phospho-L-seryl-[protein] + ADP + H(+). It catalyses the reaction L-threonyl-[protein] + ATP = O-phospho-L-threonyl-[protein] + ADP + H(+). Functionally, serine/threonine protein kinase involved in the cytoplasm to vacuole transport (Cvt) and found to be essential in autophagy, where it is required for the formation of autophagosomes. Involved in the clearance of protein aggregates which cannot be efficiently cleared by the proteasome. Required for selective autophagic degradation of the nucleus (nucleophagy) as well as for mitophagy which contributes to regulate mitochondrial quantity and quality by eliminating the mitochondria to a basal level to fulfill cellular energy requirements and preventing excess ROS production. Also involved in endoplasmic reticulum-specific autophagic process, in selective removal of ER-associated degradation (ERAD) substrates. Plays a key role in ATG9 and ATG23 cycling through the pre-autophagosomal structure and is necessary to promote ATG18 binding to ATG9 through phosphorylation of ATG9. Catalyzes phosphorylation of ATG4, decreasing the interaction between ATG4 and ATG8 and impairing deconjugation of PE-conjugated forms of ATG8. Required for conidiation and development of aerial hyphae. This chain is Serine/threonine-protein kinase atg1, found in Aspergillus oryzae (strain ATCC 42149 / RIB 40) (Yellow koji mold).